A 2773-amino-acid polypeptide reads, in one-letter code: MDAEPFDEVDEYTTYPSLPASVICPVADTKTRYELSWQPSGHHPQEEGDDCAVVTLVYAAWALMASRMTSSERVVFDTIDGRPDRPAARPLRVLCASSQTVGEYLQALRAHTSSEESYMASPDCKSKRHPTSSTLIATRTSGDAKSSNGTIGNGLPSLAGYPLVLDLQLRGSRLQATAMSDSRCTEPWIVFRLLIRLEYCMKGLHEADSRTRLADIDLMSPDDVEQIWKWNGTLPAAVERCMHDMFEDQVYSQPLALAVDAWDGRLTYKELDELSEKLAGHLIDADVGPEVIVPLCFEKSMWMPIAMLGVLKAGGSFTLLEPSFPEQRLRTIVEKVNASVMISSPSNMSLSSRLLKRVVELDSCSVKSFSAHPSRPRNSQPSSTAMFAVFTSGSTGVPKGAILTHTNYSSALAYQLQPLGFTKDSRVFDFASYAFDVSVHNVFATLTSGACLCIPSDEDRHNDISKVMVDMRVTISHLTPSVTRLIDPDSQPFLKTMVFTGEPLSVDDATRWWGKVDVVNEYGPAECTINTVNSRPISPEAATNIGLPVGVAAWITDPENHQVLVPIGCVGELLVEGPLVGRGYIGDPIKTAASFIQDPKWLLRGVSGHPGRKGRLYKTGDLVRYCADGSLSYLGRKDAQVKIRGQRVHLGDVEHWTQVCMPEAQRVFADVIEPQAISPVPTLAVFVQSPEMGENTATNERPVQIRALRADVQAKLSQHLPSYMVPTVSFWMETLPMTPTGKMDRRMLRRIGSSFSAEQLAQARADRRDGPKRQPTCEMEERMRNIWARVLGMLPQDIHLESNFFHLGGDSIASMRVVAYARRLGIQVMVADVFQHPSLHDLAKNCSQTLARAPEDIPAFSLLGPHFNHALFVQDMSTRYALDPMTIQDAYPCTRLQEGLMFLTSKRPGDYIEQNVLELARDLSLEGLRNAWEQAVKAMPILRTRIAQHNHVGLVQLVLDDTADWDEAKGLEKYLAADRKRSMGLGEPLSRFALVRDEEGTCKWLVWTIHHAIYDGWSIRLVTDAVAEAYGGRSIPQGPQFQAFIKYVQDQDERAAVNYWQRNLQGFDSAPFPPNVPSVDQPVADAAVAHSFATPSGAHGCITTSMLIRAAWALVVGRMANSNDVVFGSTLHGRNAAVNGLDEMVAPTIATIPVRVRFCSTQYVPSYLQAITQEAAEMMPYEQTGLQRIAALSSDAEKACKFQTHVVIQPEDCIPGRSLLGQWRSDSQDQWFSTYALTVEVWLRSDDIFASAMFDSRTIQSWVVTGMLQRLEWTMHQLHHATPSQTLGEINMSSAEDLEQIWQWNERVPEPVNRCIHDLLADQVQARPDSPAICAWDGELTYRKLDELSTRMSHSLLQLGAGFHKGLVPLCFDKSMWTAVAILGVLKAGVGFILLDPHLPEQRMRDIVDQVGSKVIVTCPTREILCSRLAEATVAISWDYFSGQLDWTQQELPSVSPSSTAYVVFTSGSTGTPKGVVVTHANAVSAQHHQLEPMGHTPESRLFDFASYSFDVSISNIVSMLACGGCLCVPSESDRTDDMEKSIVSLRVNALDLTPSTLQLLSPERLPAVRQLTLGGEPLREADVEKWCGKTRICNAYGPSECTPTATINSNAMEPQMATHIGKGAGVVTWIVDADDHDELLPLGCTGELLLEGPLVGRGYFNDSAKTAAAFIEDPKWLLRGSISHPGRQGRLYKTGDLVKYNRDGSLAFVGRKDTQVKVRGQRVEPGEIEAVLRSHESVDGAVVVFHRLTDQELWLAAFVTTREDDGKIPQSQSLAHDETQLKQKRIQAWEEEFEGETYLAIGATEAENIGRDFVGWSSMYDGSEINKVEMNEWLDDTIATMLNGGPAGHVLEIGSGSGMMLFNLANHSLQSYIGVDPAMRAVDFTTKAAKSVPDLADKVNVFKGTAEDIMNLDMPIHSELAVMNSVVQYFPSQDYLFNIIQHLASLGSIKTIFVGDIRSHALHKEFMARRALHIAGKDASREEFSGIMENLLKGEPELLVDPGFFTSLPHRIHGVTHVEILPKRMKATNELSSYRYAAVLHVNSHGEQAKDGRAQDIGADEWIDYVSNGLDRQAVSGLLGTASRVAISNIPYSKTIYEREIVNAVEASKNIPKLERESEWLAAALQASQEHSSLCAFDLAELAQLAGYRVECSWARQYSQRGGLDAVFYCGGSGTDSERRTLFRFPTDHEGRPCHVLSTNPLEQQRKSKLRGDLEQLLRSKLPSYMVPQAIKILDKMPVNHTGKIDRSMLSESLQQKAPPTARKRLPSTAPERAMQQIWSKVLSIESSQIGLDDGFIKLGGNSLSAMKVVSMAREEGIRLEVADMFHHSTTSIAHLLQTAAAGVSESGAALPGVTSDRLLSDLARYDCTIAMAQSEAANKRLSATSHGGIRDTRLTVVLTGANGFIGTQILRQLLDHGRFSRVIAIVRGTSASKARQRAIDAAKNAQWWSEFYSSELEVWRGDLALPRLGLGKENWNTLADGTVDVFIHNGASVHFMKSYSALQAANVESTAQVLRVAAENPSMRVVYVSSARCCDPELEREEDVAKALADRPNGYTTTKFIAEALVKRAAARGLGRRDQFAVVSPGLVVGTPTEGVANADDWLWRMTAACIRVGVVNGEESDNWIPIADAAATATTVIETSLGRSSGIVTQVKGGLTMGEFWETLRAIGYTLRGEDSSTCMAAIRQDVEKNRDTHPLGALSDMLQDLADTARSQWADSWRTGGLSSPARLKLALVKSAGFLSKVGVLPLPDGNDEPAQARENLRAFTRSGG.

Residues 246 to 644 (FEDQVYSQPL…GRKDAQVKIR (399 aa)) form an adenylation 1 region. A Carrier 1 domain is found at 774 to 850 (QPTCEMEERM…DLAKNCSQTL (77 aa)). Position 811 is an O-(pantetheine 4'-phosphoryl)serine (serine 811). The condensation stretch occupies residues 888–1301 (QDAYPCTRLQ…MSSAEDLEQI (414 aa)). The tract at residues 1321 to 1720 (ADQVQARPDS…GRKDTQVKVR (400 aa)) is adenylation 2. Residues 1810-1949 (IGRDFVGWSS…IIQHLASLGS (140 aa)) are methylation (Met) domain. Positions 2250-2271 (MLSESLQQKAPPTARKRLPSTA) are disordered. The 79-residue stretch at 2267–2345 (LPSTAPERAM…HLLQTAAAGV (79 aa)) folds into the Carrier 2 domain. Position 2304 is an O-(pantetheine 4'-phosphoryl)serine (serine 2304). Residues 2397–2715 (TVVLTGANGF…LQDLADTARS (319 aa)) are thiesterase (TE) domain.

It belongs to the NRP synthetase family. It depends on pantetheine 4'-phosphate as a cofactor.

The enzyme catalyses (S)-1-pyrroline-5-carboxylate + L-arginine + S-adenosyl-L-methionine + 2 ATP = peramine + 2 AMP + S-adenosyl-L-homocysteine + 2 diphosphate + H2O + 2 H(+). In terms of biological role, nonribosomal peptide synthetase involved in the biosynthesis of peramine, a pyrrolopyrazine synthesized in association with the grass host that protects the plant from insect herbivory. The single multifunctional NRPS perA seems to be responsible for all catalytic steps in the biosynthesis of peramine. The condensation domain of perA is proposed to catalyze formation of a peptide bond between 1-pyrroline-5-carboxylate and arginine. The methylation domain of perA would catalyze the N-methylation of the alpha-amino group of arginine. The reductase domain is proposed to be responsible for reduction of the thioester and the cyclization to form an iminium ion resulting in release from the peptide synthetase. Deprotonation of this intermediate and oxidation of the pyrroline ring would give rise to peramine. This final oxidation to give the pyrrole functionality may be spontaneous. In Epichloe festucae (strain Fl1), this protein is Peramine synthetase A.